Here is a 177-residue protein sequence, read N- to C-terminus: Large ribosomal subunit protein uL10 (177 aa).

Belongs to the universal ribosomal protein uL10 family. In terms of assembly, part of the ribosomal stalk of the 50S ribosomal subunit. The N-terminus interacts with L11 and the large rRNA to form the base of the stalk. The C-terminus forms an elongated spine to which L12 dimers bind in a sequential fashion forming a multimeric L10(L12)X complex.

Functionally, forms part of the ribosomal stalk, playing a central role in the interaction of the ribosome with GTP-bound translation factors. This Xanthomonas oryzae pv. oryzae (strain MAFF 311018) protein is Large ribosomal subunit protein uL10.